Here is a 218-residue protein sequence, read N- to C-terminus: N-(5'-phosphoribosyl)anthranilate isomerase (218 aa).

It belongs to the TrpF family.

It carries out the reaction N-(5-phospho-beta-D-ribosyl)anthranilate = 1-(2-carboxyphenylamino)-1-deoxy-D-ribulose 5-phosphate. The protein operates within amino-acid biosynthesis; L-tryptophan biosynthesis; L-tryptophan from chorismate: step 3/5. The protein is N-(5'-phosphoribosyl)anthranilate isomerase of Alcanivorax borkumensis (strain ATCC 700651 / DSM 11573 / NCIMB 13689 / SK2).